The primary structure comprises 356 residues: Putative aminopeptidase FrvX (356 aa).

2 residues coordinate a divalent metal cation: His-61 and Asp-175. Glu-205 functions as the Proton acceptor in the catalytic mechanism. Residues Glu-206, Asp-228, and His-316 each contribute to the a divalent metal cation site.

It belongs to the peptidase M42 family. Requires a divalent metal cation as cofactor.

The protein is Putative aminopeptidase FrvX (frvX) of Escherichia coli (strain K12).